Reading from the N-terminus, the 68-residue chain is UPF0435 protein Sca_1453 (68 aa).

This sequence belongs to the UPF0435 family.

The chain is UPF0435 protein Sca_1453 from Staphylococcus carnosus (strain TM300).